A 490-amino-acid polypeptide reads, in one-letter code: NADP-reducing hydrogenase subunit HndC (490 aa).

4Fe-4S ferredoxin-type domains lie at 433-462 (LTYTIDPAKCTGCGLCTRVCPVECISGTKK) and 463-490 (QPHTIDTTRCIKCGACYDKCKFDSIIKQ).

This sequence belongs to the complex I 51 kDa subunit family. In terms of assembly, heterotetramer composed of HndA, HndB, HndC and HndD subunits. HndC is probably the reducing subunit.

The enzyme catalyses H2 + NADP(+) = NADPH + H(+). Inhibited by oxygen. In terms of biological role, catalyzes the reduction of NADP in the presence of molecular H2 to yield NADPH. The chain is NADP-reducing hydrogenase subunit HndC (hndC) from Solidesulfovibrio fructosivorans (Desulfovibrio fructosivorans).